Reading from the N-terminus, the 311-residue chain is MGLTLLLLLLLGLEGQGIVGSLPEVLQAPVGSSILVQCHYRLQDVKAQKVWCRFLPEGCQPLVSSAVDRRAPAGRRTFLTDLGGGLLQVEMVTLQEEDAGEYGCMVDGARGPQILHRVSLNILPPEEEEETHKIGSLAENAFSDPAGSANPLEPSQDEKSIPLIWGAVLLVGLLVAAVVLFAVMAKRKQGNRLGVCGRFLSSRVSGMNPSSVVHHVSDSGPAAELPLDVPHIRLDSPPSFDNTTYTSLPLDSPSGKPSLPAPSSLPPLPPKVLVCSKPVTYATVIFPGGNKGGGTSCGPAQNPPNNQTPSS.

Positions 1–15 are cleaved as a signal peptide; sequence MGLTLLLLLLLGLEG. An Ig-like V-type domain is found at 16–121; the sequence is QGIVGSLPEV…PQILHRVSLN (106 aa). Residues 16-162 are Extracellular-facing; the sequence is QGIVGSLPEV…EPSQDEKSIP (147 aa). 2 disulfide bridges follow: C38-C104 and C52-C59. A helical transmembrane segment spans residues 163–183; that stretch reads LIWGAVLLVGLLVAAVVLFAV. Topologically, residues 184–311 are cytoplasmic; the sequence is MAKRKQGNRL…NPPNNQTPSS (128 aa). C196 carries the S-palmitoyl cysteine lipid modification. The interval 229 to 263 is disordered; that stretch reads VPHIRLDSPPSFDNTTYTSLPLDSPSGKPSLPAPS. The span at 239 to 249 shows a compositional bias: polar residues; it reads SFDNTTYTSLP. An ITIM motif is present at residues 279–284; the sequence is VTYATV. The disordered stretch occupies residues 287 to 311; it reads PGGNKGGGTSCGPAQNPPNNQTPSS.

As to quaternary structure, when phosphorylated, interacts with PTPN6. When phosphorylated, interacts with PTPN11. Phosphorylated on tyrosine residues. Detected in platelets, monocytic leukemia and in T-cell leukemia.

It is found in the cell membrane. Its subcellular location is the cytoplasm. Functionally, cell surface receptor that may play a role in the innate and adaptive immune response. The chain is Trem-like transcript 1 protein (TREML1) from Homo sapiens (Human).